The sequence spans 212 residues: Uracil phosphoribosyltransferase (212 aa).

Residues Arg78, Arg103, and 130 to 138 (DPMLATGGS) each bind 5-phospho-alpha-D-ribose 1-diphosphate. Residues Ile193 and 198 to 200 (GDA) each bind uracil. Residue Asp199 participates in 5-phospho-alpha-D-ribose 1-diphosphate binding.

The protein belongs to the UPRTase family. It depends on Mg(2+) as a cofactor.

It carries out the reaction UMP + diphosphate = 5-phospho-alpha-D-ribose 1-diphosphate + uracil. It functions in the pathway pyrimidine metabolism; UMP biosynthesis via salvage pathway; UMP from uracil: step 1/1. Its activity is regulated as follows. Allosterically activated by GTP. Its function is as follows. Catalyzes the conversion of uracil and 5-phospho-alpha-D-ribose 1-diphosphate (PRPP) to UMP and diphosphate. The protein is Uracil phosphoribosyltransferase of Ectopseudomonas mendocina (strain ymp) (Pseudomonas mendocina).